A 302-amino-acid chain; its full sequence is Methionyl-tRNA formyltransferase (302 aa).

Residue 108 to 111 (SLLP) participates in (6S)-5,6,7,8-tetrahydrofolate binding.

Belongs to the Fmt family.

The enzyme catalyses L-methionyl-tRNA(fMet) + (6R)-10-formyltetrahydrofolate = N-formyl-L-methionyl-tRNA(fMet) + (6S)-5,6,7,8-tetrahydrofolate + H(+). Its function is as follows. Attaches a formyl group to the free amino group of methionyl-tRNA(fMet). The formyl group appears to play a dual role in the initiator identity of N-formylmethionyl-tRNA by promoting its recognition by IF2 and preventing the misappropriation of this tRNA by the elongation apparatus. The protein is Methionyl-tRNA formyltransferase of Nitratiruptor sp. (strain SB155-2).